The sequence spans 315 residues: Aldo-keto reductase family 4 member C11 (315 aa).

Alanine 2 carries the post-translational modification N-acetylalanine. NADP(+)-binding positions include 23–24 and aspartate 47; that span reads TW. Catalysis depends on tyrosine 52, which acts as the Proton donor. NADP(+)-binding positions include histidine 114, 158–159, glutamine 180, 207–213, 256–258, and 262–266; these read SN, SPLGSPG, KST, and RIREN. A Phosphoserine modification is found at serine 295.

This sequence belongs to the aldo/keto reductase family.

Its function is as follows. Oxidoreductase that may act on a broad range of substrates such as ketosteroids, aldehydes, ketones and sugars. This Arabidopsis thaliana (Mouse-ear cress) protein is Aldo-keto reductase family 4 member C11 (AKR4C11).